The following is a 363-amino-acid chain: Ribosomal RNA large subunit methyltransferase M (363 aa).

S-adenosyl-L-methionine is bound by residues Ser194, 227–230 (CPGG), Asp246, Asp266, and Asp284. Catalysis depends on Lys313, which acts as the Proton acceptor.

It belongs to the class I-like SAM-binding methyltransferase superfamily. RNA methyltransferase RlmE family. RlmM subfamily. Monomer.

It is found in the cytoplasm. The catalysed reaction is cytidine(2498) in 23S rRNA + S-adenosyl-L-methionine = 2'-O-methylcytidine(2498) in 23S rRNA + S-adenosyl-L-homocysteine + H(+). Catalyzes the 2'-O-methylation at nucleotide C2498 in 23S rRNA. In Haemophilus influenzae (strain PittEE), this protein is Ribosomal RNA large subunit methyltransferase M.